A 162-amino-acid polypeptide reads, in one-letter code: NADH-quinone oxidoreductase subunit I 2 (162 aa).

2 4Fe-4S ferredoxin-type domains span residues 52–82 and 93–122; these read LRRY…IEAG and VRYD…EGPN. The [4Fe-4S] cluster site is built by cysteine 62, cysteine 65, cysteine 68, cysteine 72, cysteine 102, cysteine 105, cysteine 108, and cysteine 112.

Belongs to the complex I 23 kDa subunit family. In terms of assembly, NDH-1 is composed of 14 different subunits. Subunits NuoA, H, J, K, L, M, N constitute the membrane sector of the complex. [4Fe-4S] cluster serves as cofactor.

Its subcellular location is the cell inner membrane. It carries out the reaction a quinone + NADH + 5 H(+)(in) = a quinol + NAD(+) + 4 H(+)(out). Its function is as follows. NDH-1 shuttles electrons from NADH, via FMN and iron-sulfur (Fe-S) centers, to quinones in the respiratory chain. The immediate electron acceptor for the enzyme in this species is believed to be ubiquinone. Couples the redox reaction to proton translocation (for every two electrons transferred, four hydrogen ions are translocated across the cytoplasmic membrane), and thus conserves the redox energy in a proton gradient. This is NADH-quinone oxidoreductase subunit I 2 from Rhodopseudomonas palustris (strain HaA2).